Here is a 1291-residue protein sequence, read N- to C-terminus: Histone-lysine N-methyltransferase SETDB1 (1291 aa).

A coiled-coil region spans residues E18–L64. The disordered stretch occupies residues R108–D147. A phosphoserine mark is found at S112 and S117. At T120 the chain carries Phosphothreonine. Positions E124 to L133 are enriched in acidic residues. Residue K182 forms a Glycyl lysine isopeptide (Lys-Gly) (interchain with G-Cter in SUMO2); alternate linkage. K182 is covalently cross-linked (Glycyl lysine isopeptide (Lys-Gly) (interchain with G-Cter in ubiquitin); alternate). Tudor domains lie at K257–T320 and L347–T403. Residues S404–P545 form a disordered region. Residues Q433–Q444 are compositionally biased toward polar residues. Positions V448–S468 are enriched in pro residues. A compositionally biased stretch (polar residues) spans E477–V515. The segment covering S528 to P539 has biased composition (low complexity). The MBD domain occupies Y594–L665. The Pre-SET domain occupies V727–G800. Residues C729, C731, C735, C741, C743, C781, C785, C787, and C792 each coordinate Zn(2+). In terms of domain architecture, SET spans V803–N1266. S-adenosyl-L-methionine contacts are provided by residues K813–W815, D851, and Y853. A Glycyl lysine isopeptide (Lys-Gly) (interchain with G-Cter in ubiquitin) cross-link involves residue K867. The segment at E868–A1160 is disordered. Acidic residues predominate over residues E896–D907. The span at D951–I963 shows a compositional bias: pro residues. S1025 is subject to Phosphoserine. Residues I1031–K1050 are compositionally biased toward basic and acidic residues. Residue K1032 forms a Glycyl lysine isopeptide (Lys-Gly) (interchain with G-Cter in SUMO2); alternate linkage. A Glycyl lysine isopeptide (Lys-Gly) (interchain with G-Cter in SUMO1); alternate cross-link involves residue K1032. K1038 is covalently cross-linked (Glycyl lysine isopeptide (Lys-Gly) (interchain with G-Cter in SUMO2)). A compositionally biased stretch (polar residues) spans S1052–Y1063. S1066 carries the phosphoserine modification. Residue K1069 forms a Glycyl lysine isopeptide (Lys-Gly) (interchain with G-Cter in SUMO2) linkage. Residues L1100–S1115 show a composition bias toward low complexity. Positions R1116–S1140 are enriched in polar residues. K1149 participates in a covalent cross-link: Glycyl lysine isopeptide (Lys-Gly) (interchain with G-Cter in SUMO2). An N6,N6,N6-trimethyllysine; alternate mark is found at K1170 and K1178. K1170 and K1178 each carry N6,N6-dimethyllysine; alternate. Residues R1220 and N1223–H1224 contribute to the S-adenosyl-L-methionine site. 4 residues coordinate Zn(2+): C1226, C1279, C1281, and C1286. Residues K1275–L1291 enclose the Post-SET domain.

The protein belongs to the class V-like SAM-binding methyltransferase superfamily. Histone-lysine methyltransferase family. Suvar3-9 subfamily. In terms of assembly, part of a complex containing at least CDYL, REST, WIZ, SETDB1, EHMT1 and EHMT2. Forms a complex with ATRX, TRIM28 and ZNF274. Probably part of a corepressor complex containing ZNF304, TRIM28, SETDB1 and DNMT1. Interacts with TRIM28/TIF1B. Interacts with ATF7IP and ATF7IP2; the interaction with ATF7IP protects SETDB1 from proteasomal degradation and is required to stimulate histone methyltransferase activity and facilitate the conversion of dimethylated to trimethylated H3 'Lys-9'. Interacts with CBX1 and CBX5. Interacts with DNMT3A and DNMT3B. Interacts with SUMO2. Interacts with MPHOSPH8. Interacts with ERG. Interacts with HDAC1, HDAC2, SIN3A and SIN3B. Interacts with ATRX. Interacts with RESF1. Interacts with ZNF638. Interacts with TASOR. Interacts with ZNF263; recruited to the SIX3 promoter along with other proteins involved in chromatin modification and transcriptional corepression where it contributes to transcriptional repression. Interacts with PHF13; the interaction probably enhances SETDB1 chromatin-associated levels and activity. Interacts with VRK1. Post-translationally, degraded by the proteasome, shielded by interaction with ATF7IP. Monoubiquitinated at Lys-867 by E2 enzymes of the UBE2E family. The conjugated-Ub is protected from deubiquitination by the SET domain. Monoubiquitination at Lys-867 is required for catalytic activity, H3K9 methylation and endogenous retrovirus silencing. In terms of tissue distribution, widely expressed. High expression in testis.

The protein localises to the nucleus. It is found in the cytoplasm. It localises to the chromosome. The enzyme catalyses N(6),N(6)-dimethyl-L-lysyl(9)-[histone H3] + S-adenosyl-L-methionine = N(6),N(6),N(6)-trimethyl-L-lysyl(9)-[histone H3] + S-adenosyl-L-homocysteine + H(+). Histone methyltransferase that specifically trimethylates 'Lys-9' of histone H3. H3 'Lys-9' trimethylation represents a specific tag for epigenetic transcriptional repression by recruiting HP1 (CBX1, CBX3 and/or CBX5) proteins to methylated histones. Mainly functions in euchromatin regions, thereby playing a central role in the silencing of euchromatic genes. H3 'Lys-9' trimethylation is coordinated with DNA methylation. Required for HUSH-mediated heterochromatin formation and gene silencing. Forms a complex with MBD1 and ATF7IP that represses transcription and couples DNA methylation and histone 'Lys-9' trimethylation. Its activity is dependent on MBD1 and is heritably maintained through DNA replication by being recruited by CAF-1. SETDB1 is targeted to histone H3 by TRIM28/TIF1B, a factor recruited by KRAB zinc-finger proteins. Probably forms a corepressor complex required for activated KRAS-mediated promoter hypermethylation and transcriptional silencing of tumor suppressor genes (TSGs) or other tumor-related genes in colorectal cancer (CRC) cells. Required to maintain a transcriptionally repressive state of genes in undifferentiated embryonic stem cells (ESCs). In ESCs, in collaboration with TRIM28, is also required for H3K9me3 and silencing of endogenous and introduced retroviruses in a DNA-methylation independent-pathway. Associates at promoter regions of tumor suppressor genes (TSGs) leading to their gene silencing. The SETDB1-TRIM28-ZNF274 complex may play a role in recruiting ATRX to the 3'-exons of zinc-finger coding genes with atypical chromatin signatures to establish or maintain/protect H3K9me3 at these transcriptionally active regions. This Homo sapiens (Human) protein is Histone-lysine N-methyltransferase SETDB1.